Reading from the N-terminus, the 332-residue chain is MPSMPEEPLLTPTPDRFCMFPIHYPQIWEMYKKAEASFWTAEEVDLSQDNRDWENSLNDGERHFIKHVLAFFAASDGIVLENLASRFMSDVQVSEARAFYGFQIAIENIHSEMYSLLLDTYIKDNKERDHLFRAIETIPCVAKKAQWAMKWIDGSQTFAERIIAFACVEGIFFSGSFCSIFWLKKRGLMPGLTFSNELISRDEGLHCDFACLLYTLLKTKLSEERVKSIVCDAVEIEREFVCDALPCALVGMNRDLMSQYIEFVADRLLGALGYGKVYGVTNPFDWMELISLQGKTNFFEKRVGDYQKASVMSSVNGNGAFDNHVFSLDEDF.

Fe cation contacts are provided by Asp76, Glu107, and His110. The active site involves Tyr114. The Fe cation site is built by Glu169, Glu203, and His206.

Belongs to the ribonucleoside diphosphate reductase small chain family. As to quaternary structure, homodimer and heterodimer with RNR2A. Heterotetramer of two R1 and two R2 chains. Interacts with CSN7 (via C-terminal tail). It depends on Fe cation as a cofactor. As to expression, expressed in roots, cauline and rosette leaves, stems and flowers.

The protein resides in the cytoplasm. The protein localises to the nucleus. The enzyme catalyses a 2'-deoxyribonucleoside 5'-diphosphate + [thioredoxin]-disulfide + H2O = a ribonucleoside 5'-diphosphate + [thioredoxin]-dithiol. Its function is as follows. Provides the precursors necessary for DNA synthesis. Catalyzes the biosynthesis of deoxyribonucleotides from the corresponding ribonucleotides. Involved in DNA damage repair and programmed cell death inhibition. The protein is Ribonucleoside-diphosphate reductase small chain C (TSO2) of Arabidopsis thaliana (Mouse-ear cress).